A 652-amino-acid polypeptide reads, in one-letter code: tRNA 5-methylaminomethyl-2-thiouridine biosynthesis bifunctional protein MnmC (652 aa).

The tRNA (mnm(5)s(2)U34)-methyltransferase stretch occupies residues 1 to 227 (MLSWKNDLTP…KREMLTGKYS (227 aa)). Residues 259-652 (IGAGIAGSTL…ARFLYRRIRK (394 aa)) are FAD-dependent cmnm(5)s(2)U34 oxidoreductase.

In the N-terminal section; belongs to the methyltransferase superfamily. tRNA (mnm(5)s(2)U34)-methyltransferase family. It in the C-terminal section; belongs to the DAO family. FAD serves as cofactor.

Its subcellular location is the cytoplasm. The catalysed reaction is 5-aminomethyl-2-thiouridine(34) in tRNA + S-adenosyl-L-methionine = 5-methylaminomethyl-2-thiouridine(34) in tRNA + S-adenosyl-L-homocysteine + H(+). Catalyzes the last two steps in the biosynthesis of 5-methylaminomethyl-2-thiouridine (mnm(5)s(2)U) at the wobble position (U34) in tRNA. Catalyzes the FAD-dependent demodification of cmnm(5)s(2)U34 to nm(5)s(2)U34, followed by the transfer of a methyl group from S-adenosyl-L-methionine to nm(5)s(2)U34, to form mnm(5)s(2)U34. This is tRNA 5-methylaminomethyl-2-thiouridine biosynthesis bifunctional protein MnmC from Leptospira borgpetersenii serovar Hardjo-bovis (strain JB197).